We begin with the raw amino-acid sequence, 342 residues long: Ketol-acid reductoisomerase (NADP(+)) (342 aa).

Positions 2–181 (VKVYYNGDIK…GGARAGVLET (180 aa)) constitute a KARI N-terminal Rossmann domain. NADP(+) contacts are provided by residues 25–28 (YGSQ), Arg-48, Ser-52, and 82–85 (DEQQ). His-107 is a catalytic residue. Gly-133 is an NADP(+) binding site. The KARI C-terminal knotted domain occupies 182-327 (TFKEETETDL…RKLREMMPFV (146 aa)). Mg(2+) contacts are provided by Asp-190, Glu-194, Glu-226, and Glu-230. Ser-251 contributes to the substrate binding site.

The protein belongs to the ketol-acid reductoisomerase family. Mg(2+) is required as a cofactor.

It carries out the reaction (2R)-2,3-dihydroxy-3-methylbutanoate + NADP(+) = (2S)-2-acetolactate + NADPH + H(+). It catalyses the reaction (2R,3R)-2,3-dihydroxy-3-methylpentanoate + NADP(+) = (S)-2-ethyl-2-hydroxy-3-oxobutanoate + NADPH + H(+). It functions in the pathway amino-acid biosynthesis; L-isoleucine biosynthesis; L-isoleucine from 2-oxobutanoate: step 2/4. Its pathway is amino-acid biosynthesis; L-valine biosynthesis; L-valine from pyruvate: step 2/4. In terms of biological role, involved in the biosynthesis of branched-chain amino acids (BCAA). Catalyzes an alkyl-migration followed by a ketol-acid reduction of (S)-2-acetolactate (S2AL) to yield (R)-2,3-dihydroxy-isovalerate. In the isomerase reaction, S2AL is rearranged via a Mg-dependent methyl migration to produce 3-hydroxy-3-methyl-2-ketobutyrate (HMKB). In the reductase reaction, this 2-ketoacid undergoes a metal-dependent reduction by NADPH to yield (R)-2,3-dihydroxy-isovalerate. In Bacillus subtilis (strain 168), this protein is Ketol-acid reductoisomerase (NADP(+)).